Here is a 642-residue protein sequence, read N- to C-terminus: Threonine--tRNA ligase (642 aa).

The region spanning 1-61 (MPVITLPDGS…ESDAQLAIIT (61 aa)) is the TGS domain. The segment at 243-534 (DHRKIGKQLD…LTEEYAGFYP (292 aa)) is catalytic. Positions 334, 385, and 511 each coordinate Zn(2+).

This sequence belongs to the class-II aminoacyl-tRNA synthetase family. As to quaternary structure, homodimer. Zn(2+) is required as a cofactor.

The protein localises to the cytoplasm. It catalyses the reaction tRNA(Thr) + L-threonine + ATP = L-threonyl-tRNA(Thr) + AMP + diphosphate + H(+). Catalyzes the attachment of threonine to tRNA(Thr) in a two-step reaction: L-threonine is first activated by ATP to form Thr-AMP and then transferred to the acceptor end of tRNA(Thr). Also edits incorrectly charged L-seryl-tRNA(Thr). This is Threonine--tRNA ligase from Serratia proteamaculans (strain 568).